A 38-amino-acid polypeptide reads, in one-letter code: Large ribosomal subunit protein bL36 (38 aa).

Belongs to the bacterial ribosomal protein bL36 family.

This Pseudothermotoga lettingae (strain ATCC BAA-301 / DSM 14385 / NBRC 107922 / TMO) (Thermotoga lettingae) protein is Large ribosomal subunit protein bL36.